The sequence spans 619 residues: 2-isopropylmalate synthase (619 aa).

The Pyruvate carboxyltransferase domain occupies 61–336; the sequence is PRWLSTDLRD…SPNLDFSDLT (276 aa). Asp70, His275, His277, and Asn311 together coordinate a divalent metal cation.

This sequence belongs to the alpha-IPM synthase/homocitrate synthase family. LeuA type 2 subfamily. As to quaternary structure, homodimer. It depends on a divalent metal cation as a cofactor.

Its subcellular location is the cytoplasm. It is found in the mitochondrion. It carries out the reaction 3-methyl-2-oxobutanoate + acetyl-CoA + H2O = (2S)-2-isopropylmalate + CoA + H(+). It functions in the pathway amino-acid biosynthesis; L-leucine biosynthesis; L-leucine from 3-methyl-2-oxobutanoate: step 1/4. Functionally, catalyzes the condensation of the acetyl group of acetyl-CoA with 3-methyl-2-oxobutanoate (2-oxoisovalerate) to form 3-carboxy-3-hydroxy-4-methylpentanoate (2-isopropylmalate). The chain is 2-isopropylmalate synthase (LEU4) from Saccharomyces cerevisiae (strain ATCC 204508 / S288c) (Baker's yeast).